We begin with the raw amino-acid sequence, 264 residues long: 1-(5-phosphoribosyl)-5-[(5-phosphoribosylamino)methylideneamino] imidazole-4-carboxamide isomerase (264 aa).

It belongs to the HisA/HisF family.

It is found in the cytoplasm. The enzyme catalyses 1-(5-phospho-beta-D-ribosyl)-5-[(5-phospho-beta-D-ribosylamino)methylideneamino]imidazole-4-carboxamide = 5-[(5-phospho-1-deoxy-D-ribulos-1-ylimino)methylamino]-1-(5-phospho-beta-D-ribosyl)imidazole-4-carboxamide. Its pathway is amino-acid biosynthesis; L-histidine biosynthesis; L-histidine from 5-phospho-alpha-D-ribose 1-diphosphate: step 4/9. This is 1-(5-phosphoribosyl)-5-[(5-phosphoribosylamino)methylideneamino] imidazole-4-carboxamide isomerase (HIS6) from Yarrowia lipolytica (strain CLIB 122 / E 150) (Yeast).